A 613-amino-acid polypeptide reads, in one-letter code: Ribosome-associated molecular chaperone SSB1 (613 aa).

The tract at residues 1-391 (MADGVFQGAI…ILTGQSTSDE (391 aa)) is nucleotide binding domain (NBD). ATP-binding positions include 16–18 (TTY), Lys-73, 205–207 (GGT), 271–278 (ERAKRTLS), and Gly-342. An inter-domain linker region spans residues 392 to 402 (TKDLLLLDVAP). The substrate binding domain (SBD) stretch occupies residues 403-613 (LSLGVGMQGD…RVVTKAMSSR (211 aa)). The segment at 516 to 612 (SEDIEKMVNQ…KRVVTKAMSS (97 aa)) is lid domain (SBDalpha). The Nuclear export signal motif lies at 574 to 582 (IEAALADAL).

This sequence belongs to the heat shock protein 70 family. Ssb-type Hsp70 subfamily. Binds to ribosomes. Binds close to the ribosomal tunnel exit via contacts with both ribosomal proteins and rRNA. Directly interacts with nascent polypeptides. This interaction is dependent on the ribosome-associated complex (RAC). Interacts with SSE1. Interacts with FES1.

It is found in the cytoplasm. The enzyme catalyses ATP + H2O = ADP + phosphate + H(+). Functionally, ribosome-bound, Hsp70-type chaperone that assists in the cotranslational folding of newly synthesized proteins in the cytosol. Stimulates folding by interacting with nascent chains, binding to short, largely hydrophobic sequences exposed by unfolded proteins, thereby stabilizing longer, more slowly translated, and aggregation-prone nascent polypeptides and domains that cannot fold stably until fully synthesized. The Hsp70-protein substrate interaction depends on ATP-binding and on allosteric regulation between the NBD and the SBD. The ATP-bound state is characterized by a fast exchange rate of substrate (low affinity state), while in the ADP-bound state exchange is much slower (high affinity state). During the Hsp70 cycle, the chaperone switches between the ATP-bound state (open conformation) and the ADP-bound state (closed conformation) by major conformational rearrangements involving mainly the lid domain. Ssb cooperates with a specific Hsp40/Hsp70 co-chaperone termed the ribosome-associated complex (RAC), which stimulates the ATPase activity of the ribosome-associated pool of Ssbs and switches it to the high affinity substrate binding state. Hsp110 chaperone SSE1 and FES1 act as nucleotide exchange factors that cause substrate release. This is Ribosome-associated molecular chaperone SSB1 (SSB1) from Nakaseomyces delphensis (Yeast).